The sequence spans 164 residues: Large ribosomal subunit protein uL10 (164 aa).

This sequence belongs to the universal ribosomal protein uL10 family. As to quaternary structure, part of the ribosomal stalk of the 50S ribosomal subunit. The N-terminus interacts with L11 and the large rRNA to form the base of the stalk. The C-terminus forms an elongated spine to which L12 dimers bind in a sequential fashion forming a multimeric L10(L12)X complex.

Functionally, forms part of the ribosomal stalk, playing a central role in the interaction of the ribosome with GTP-bound translation factors. This Aliivibrio fischeri (strain MJ11) (Vibrio fischeri) protein is Large ribosomal subunit protein uL10.